Consider the following 190-residue polypeptide: Xanthine phosphoribosyltransferase 2 (190 aa).

2 residues coordinate xanthine: Leu-20 and Asn-27. 129 to 133 (ANGCA) contacts 5-phospho-alpha-D-ribose 1-diphosphate. Lys-157 is a binding site for xanthine.

This sequence belongs to the purine/pyrimidine phosphoribosyltransferase family. Xpt subfamily. As to quaternary structure, homodimer.

The protein localises to the cytoplasm. The enzyme catalyses XMP + diphosphate = xanthine + 5-phospho-alpha-D-ribose 1-diphosphate. Its pathway is purine metabolism; XMP biosynthesis via salvage pathway; XMP from xanthine: step 1/1. Converts the preformed base xanthine, a product of nucleic acid breakdown, to xanthosine 5'-monophosphate (XMP), so it can be reused for RNA or DNA synthesis. This is Xanthine phosphoribosyltransferase 2 from Clostridium botulinum (strain ATCC 19397 / Type A).